The following is a 290-amino-acid chain: Arylamine N-acetyltransferase 1 (290 aa).

An N-acetylmethionine modification is found at methionine 1. Serine 103 contacts CoA. Position 106 to 107 (106 to 107 (IH)) interacts with substrate. Residue tyrosine 208 participates in CoA binding.

Belongs to the arylamine N-acetyltransferase family.

The protein localises to the cytoplasm. It catalyses the reaction an arylamine + acetyl-CoA = an N-acetylarylamine + CoA. Functionally, participates in the detoxification of a plethora of hydrazine and arylamine drugs. The protein is Arylamine N-acetyltransferase 1 (NAT1) of Bos taurus (Bovine).